We begin with the raw amino-acid sequence, 378 residues long: Probable endopolygalacturonase E (378 aa).

Residues methionine 1–alanine 19 form the signal peptide. Positions serine 20–lysine 38 are excised as a propeptide. A disulfide bond links cysteine 43 and cysteine 61. PbH1 repeat units lie at residues glycine 103–glycine 125, serine 174–aspartate 204, and serine 205–serine 226. The active-site Proton donor is the aspartate 219. Cysteine 221 and cysteine 237 are disulfide-bonded. Histidine 241 is a catalytic residue. PbH1 repeat units follow at residues valine 256–threonine 277, valine 285–glutamine 307, and threonine 317–cysteine 345. Residue asparagine 258 is glycosylated (N-linked (GlcNAc...) asparagine). Disulfide bonds link cysteine 345–cysteine 350 and cysteine 369–cysteine 378.

It belongs to the glycosyl hydrolase 28 family.

It is found in the secreted. The catalysed reaction is (1,4-alpha-D-galacturonosyl)n+m + H2O = (1,4-alpha-D-galacturonosyl)n + (1,4-alpha-D-galacturonosyl)m.. Functionally, involved in maceration and soft-rotting of plant tissue. Hydrolyzes the 1,4-alpha glycosidic bonds of de-esterified pectate in the smooth region of the plant cell wall. The chain is Probable endopolygalacturonase E (pgaE) from Aspergillus niger (strain ATCC MYA-4892 / CBS 513.88 / FGSC A1513).